The sequence spans 238 residues: Large ribosomal subunit protein uL1 (238 aa).

Belongs to the universal ribosomal protein uL1 family. As to quaternary structure, part of the 50S ribosomal subunit.

Functionally, binds directly to 23S rRNA. The L1 stalk is quite mobile in the ribosome, and is involved in E site tRNA release. In terms of biological role, protein L1 is also a translational repressor protein, it controls the translation of the L11 operon by binding to its mRNA. The protein is Large ribosomal subunit protein uL1 of Nostoc sp. (strain PCC 7120 / SAG 25.82 / UTEX 2576).